Consider the following 377-residue polypeptide: Nitric oxide reductase FlRd-NAD(+) reductase (377 aa).

It belongs to the FAD-dependent oxidoreductase family. FAD serves as cofactor.

Its subcellular location is the cytoplasm. The enzyme catalyses 2 reduced [nitric oxide reductase rubredoxin domain] + NAD(+) + H(+) = 2 oxidized [nitric oxide reductase rubredoxin domain] + NADH. Its pathway is nitrogen metabolism; nitric oxide reduction. One of at least two accessory proteins for anaerobic nitric oxide (NO) reductase. Reduces the rubredoxin moiety of NO reductase. In Salmonella paratyphi C (strain RKS4594), this protein is Nitric oxide reductase FlRd-NAD(+) reductase.